A 309-amino-acid chain; its full sequence is Extracellular agarase (309 aa).

The tat-type signal signal peptide spans 1-30; that stretch reads MVNRRDLIKWSAVALGAGAGLAGPAPAAHA. Positions 33–309 constitute a GH16 domain; the sequence is LEWEQYPVPA…YRWVRTYQAV (277 aa). Glutamate 155 functions as the Nucleophile in the catalytic mechanism. The active-site Proton donor is glutamate 160.

The protein belongs to the glycosyl hydrolase 16 family. In terms of processing, predicted to be exported by the Tat system. The position of the signal peptide cleavage has been experimentally proven.

Its subcellular location is the secreted. The enzyme catalyses Hydrolysis of (1-&gt;4)-beta-D-galactosidic linkages in agarose, giving the tetramer as the predominant product.. This Streptomyces coelicolor (strain ATCC BAA-471 / A3(2) / M145) protein is Extracellular agarase (dagA).